Here is a 382-residue protein sequence, read N- to C-terminus: 8-amino-7-oxononanoate synthase (382 aa).

Arg26 provides a ligand contact to substrate. Position 104 to 105 (104 to 105 (GY)) interacts with pyridoxal 5'-phosphate. His129 serves as a coordination point for substrate. Pyridoxal 5'-phosphate contacts are provided by residues Ser175, 200–203 (DEAH), and 232–235 (TLSK). Lys235 carries the post-translational modification N6-(pyridoxal phosphate)lysine. Residue Thr345 participates in substrate binding.

The protein belongs to the class-II pyridoxal-phosphate-dependent aminotransferase family. BioF subfamily. As to quaternary structure, homodimer. Pyridoxal 5'-phosphate is required as a cofactor.

It carries out the reaction 6-carboxyhexanoyl-[ACP] + L-alanine + H(+) = (8S)-8-amino-7-oxononanoate + holo-[ACP] + CO2. It functions in the pathway cofactor biosynthesis; biotin biosynthesis. Catalyzes the decarboxylative condensation of pimeloyl-[acyl-carrier protein] and L-alanine to produce 8-amino-7-oxononanoate (AON), [acyl-carrier protein], and carbon dioxide. The polypeptide is 8-amino-7-oxononanoate synthase (Mycobacterium sp. (strain JLS)).